The primary structure comprises 445 residues: Phosphoglucosamine mutase (445 aa).

Residue Ser102 is the Phosphoserine intermediate of the active site. Ser102, Asp241, Asp243, and Asp245 together coordinate Mg(2+). Residue Ser102 is modified to Phosphoserine.

The protein belongs to the phosphohexose mutase family. It depends on Mg(2+) as a cofactor. Activated by phosphorylation.

The enzyme catalyses alpha-D-glucosamine 1-phosphate = D-glucosamine 6-phosphate. Functionally, catalyzes the conversion of glucosamine-6-phosphate to glucosamine-1-phosphate. The chain is Phosphoglucosamine mutase from Escherichia coli O139:H28 (strain E24377A / ETEC).